We begin with the raw amino-acid sequence, 1078 residues long: Extracellular calcium-sensing receptor (1078 aa).

An N-terminal signal peptide occupies residues 1–19 (MAFYSCCWVLLALTWHTSA). Over 20 to 610 (YGPDQRAQKK…KEIEFLSWTE (591 aa)) the chain is Extracellular. Positions 22–188 (PDQRAQKKGD…QFKSFLRTIP (167 aa)) are ligand-binding 1 (LB1). Cysteine 60 and cysteine 101 are oxidised to a cystine. 66–70 (RGFRW) contacts phosphate. Ca(2+) contacts are provided by isoleucine 81, serine 84, leucine 87, and leucine 88. N-linked (GlcNAc...) asparagine glycosylation occurs at asparagine 90. Threonine 100 is a binding site for Ca(2+). Residue asparagine 130 is glycosylated (N-linked (GlcNAc...) asparagine). Threonine 145 lines the Ca(2+) pocket. Positions 147, 168, and 170 each coordinate L-tryptophan. Positions 170, 188, 190, 231, and 234 each coordinate Ca(2+). Positions 189–324 (NDEHQATAMA…GGTIGFALKA (136 aa)) are ligand-binding 2 (LB2). Cystine bridges form between cysteine 236/cysteine 561, cysteine 358/cysteine 395, cysteine 437/cysteine 449, cysteine 542/cysteine 562, cysteine 546/cysteine 565, cysteine 568/cysteine 582, and cysteine 585/cysteine 598. Spermine is bound by residues aspartate 238 and serine 240. Residues asparagine 261 and asparagine 287 are each glycosylated (N-linked (GlcNAc...) asparagine). Glutamate 297 is a binding site for Ca(2+). Residue glutamate 297 participates in L-tryptophan binding. N-linked (GlcNAc...) asparagine glycosylation is found at asparagine 386 and asparagine 400. 415–417 (RIS) contacts phosphate. Residues asparagine 446, asparagine 468, and asparagine 488 are each glycosylated (N-linked (GlcNAc...) asparagine). Tyrosine 489 contributes to the Ca(2+) binding site. A glycan (N-linked (GlcNAc...) asparagine) is linked at asparagine 541. Residues 542–612 (CSRDCLAGTR…IEFLSWTEPF (71 aa)) form a cysteine-rich (CR) region. Ca(2+) is bound at residue glycine 557. Asparagine 594 is a glycosylation site (N-linked (GlcNAc...) asparagine). A helical transmembrane segment spans residues 611–636 (PFGIALTLFAVLGIFLTAFVLGVFIK). Residues 637–648 (FRNTPIVKATNR) lie on the Cytoplasmic side of the membrane. The segment at 637–648 (FRNTPIVKATNR) is intracellular loop 1 (ICL1). The chain crosses the membrane as a helical span at residues 649 to 668 (ELSYLLLFSLLCCFSSSLFF). Over 669-674 (IGEPQD) the chain is Extracellular. Residues 675 to 698 (WTCRLRQPAFGISFVLCISCILVK) traverse the membrane as a helical segment. Residues 699–722 (TNRVLLVFEAKIPTSFHRKWWGLN) are Cytoplasmic-facing. Positions 699 to 722 (TNRVLLVFEAKIPTSFHRKWWGLN) are intracellular loop 2 (ICL2). Residues 723–745 (LQFLLVFLCTFMQIVICVIWLYT) traverse the membrane as a helical segment. Residues 746-769 (APPSSYRNQELEDEIIFITCHEGS) lie on the Extracellular side of the membrane. A helical transmembrane segment spans residues 770-789 (LMALGFLIGYTCLLAAICFF). At 790-805 (FAFKSRKLPENFNEAK) the chain is on the cytoplasmic side. Positions 790–805 (FAFKSRKLPENFNEAK) are intracellular loop 3 (ICL3). Residues 806–828 (FITFSMLIFFIVWISFIPAYAST) form a helical membrane-spanning segment. The Extracellular portion of the chain corresponds to 829-832 (YGKF). Residues 833 to 854 (VSAVEVIAILAASFGLLACIFF) traverse the membrane as a helical segment. The Cytoplasmic segment spans residues 855–1078 (NKIYIILFKP…STVTENVVNS (224 aa)). Residues 855-1078 (NKIYIILFKP…STVTENVVNS (224 aa)) form a C-terminus region. The segment at 880–900 (AFKVAARATLRRSNVSRKRSS) is interaction with RNF19A. At threonine 888 the chain carries Phosphothreonine; by PKC. The segment at 890-898 (RRSNVSRKR) is arginine-rich retention motif. Serine 892 carries the post-translational modification Phosphoserine; by PKC. Disordered stretches follow at residues 892 to 963 (SNVS…PRCK), 986 to 1006 (AMAH…SSDT), and 1030 to 1055 (TGLQ…PALV). Serine 899 is modified (phosphoserine; by PKA). The span at 900–918 (SSLGGSTGSTPSSSISSKS) shows a compositional bias: low complexity. Serine 920 carries the post-translational modification Phosphoserine. The span at 932-960 (QQQPLALTQQEQQQQPLTLPQQQRSQQQP) shows a compositional bias: low complexity. Over residues 993 to 1006 (THQNSLEAQKSSDT) the composition is skewed to polar residues. At serine 1061 the chain carries Phosphoserine.

The protein belongs to the G-protein coupled receptor 3 family. In terms of assembly, homodimer; disulfide-linked. Interacts with VCP. Interacts with ARRB1. Post-translationally, phosphorylation at Thr-888 by PKC impairs coupling with G(q)/G(11) G-proteins, while it does not affect G(i)/G(o)-coupling. Phosphorylation at Ser-892 by PKC and Ser-899 by PKA promote plasma membrane localization. Ubiquitinated by RNF19A; which induces proteasomal degradation. In terms of processing, N-glycosylated. In terms of tissue distribution, expressed in the temporal lobe, frontal lobe, parietal lobe, hippocampus, and cerebellum. Also found in kidney, lung, liver, heart, skeletal muscle, placenta.

Its subcellular location is the cell membrane. Its activity is regulated as follows. In resting state, adopts an open conformation, anion-binding promoting the inactive configuration. Upon aromatic amino acid-binding, the groove in the extracellular venus flytrap module is closed, thereby inducing the formation of a novel homodimer interface between subunits. Calcium ions stabilize the active state by enhancing homodimer interactions between membrane-proximal domains to fully activate the receptor. Upon activation, the homodimer adopts an asymmetric configuration of the 7-transmembrane region that primes one protomer for G-protein coupling. G-protein binding expands the transmembrane dimer interface; the restriction imposed by the receptor dimer, in combination with intracellular loop 2 (ICL2), enables G-protein activation by facilitating conformational transition of G-protein alpha. Coupling to different classes of G-proteins results in distinct CASR-G-protein interfaces. Activated by glucose, which acts as a positive allosteric modulator. Activated by positive allosteric modulator drugs cinacalcet, evocalcet and etelcalcetide, which are clinically used for the treatment of hyperparathyroidism and familial hypocalciuric hypercalcemia. Inhibited by NPS-2143, a negative allosteric modulator tested for the treatment of hypocalcemia. Activated by velcalcetide (AMG 416), a D-amino acid-containing peptide agonist that is being evaluated for the treatment of secondary hyperparathyroidism in chronic kidney disease patients receiving hemodialysis. Velcalcetide agonist acts by forming a disulfide bond with Cys-482. G-protein-coupled receptor that senses changes in the extracellular concentration of calcium ions and plays a key role in maintaining calcium homeostasis. Senses fluctuations in the circulating calcium concentration: activated by elevated circulating calcium, leading to decreased parathyroid hormone (PTH) secretion in parathyroid glands. In kidneys, acts as a key regulator of renal tubular calcium resorption. Ligand binding causes a conformation change that triggers signaling via guanine nucleotide-binding proteins (G-proteins) and modulates the activity of downstream effectors. CASR is coupled with different G(q)/G(11), G(i)/G(o)- or G(s)-classes of G-proteins depending on the context. In the parathyroid and kidney, CASR signals through G(q)/G(11) and G(i)/G(o) G-proteins: G(q)/G(11) coupling activates phospholipase C-beta, releasing diacylglycerol (DAG) and inositol 1,4,5-trisphosphate (IP3) second messengers, while G(i)/G(o) coupling mediates inhibition of adenylate cyclase activity. The G-protein-coupled receptor activity is activated by a co-agonist mechanism: aromatic amino acids, such as Trp or Phe, act concertedly with divalent cations, such as calcium or magnesium, to achieve full receptor activation. Acts as an activator of the NLRP3 inflammasome via G(i)/G(o)-mediated signaling: down-regulation of cyclic AMP (cAMP) relieving NLRP3 inhibition by cAMP. Acts as a regulator of proton-sensing receptor GPR68 in a seesaw manner: CASR-mediated signaling inhibits GPR68 signaling in response to extracellular calcium, while GPR68 inhibits CASR in presence of extracellular protons. This is Extracellular calcium-sensing receptor from Homo sapiens (Human).